A 146-amino-acid polypeptide reads, in one-letter code: uncharacterized protein (146 aa).

A Toprim domain is found at 31–119 (EKVMIVEGKS…RAYKEVAAAP (89 aa)).

This is an uncharacterized protein from Bacillus subtilis (strain 168).